The sequence spans 1009 residues: Protein-tyrosine kinase 2-beta (1009 aa).

The 321-residue stretch at Arg-39–Gln-359 folds into the FERM domain. Phosphoserine is present on residues Ser-361, Ser-375, and Ser-399. At Tyr-402 the chain carries Phosphotyrosine; by autocatalysis. The 259-residue stretch at Val-425–Tyr-683 folds into the Protein kinase domain. Residues Leu-431–Val-439, Lys-457, and Glu-503–Glu-509 each bind ATP. The active-site Proton acceptor is the Asp-549. Position 579 is a phosphotyrosine (Tyr-579). Residue Tyr-580 is modified to Phosphotyrosine; by SRC, FYN and LCK. The disordered stretch occupies residues Thr-701–Pro-725. The segment covering Glu-712–Pro-725 has biased composition (pro residues). Tyr-722 is modified (phosphotyrosine). At Ser-762 the chain carries Phosphoserine. Thr-765 is modified (phosphothreonine). The interaction with TGFB1I1 stretch occupies residues Lys-801–Glu-1009. Residues Tyr-819 and Tyr-834 each carry the phosphotyrosine modification. Phosphoserine is present on Ser-839. Thr-842 is modified (phosphothreonine). Tyr-849 is subject to Phosphotyrosine. Ser-866 is modified (phosphoserine). The tract at residues Gln-868–Glu-1009 is focal adhesion targeting (FAT). Tyr-881 bears the Phosphotyrosine; by SRC mark.

It belongs to the protein kinase superfamily. Tyr protein kinase family. FAK subfamily. Homodimer, or homooligomer. Interacts with SIRPA and SH2D3C. Interacts with ARHGAP10. Interacts with DLG4. Interacts with KCNA2. Interacts with NPHP1, ASAP1, ASAP2, ARHGAP26, SKAP2 and TGFB1I1. The Tyr-402 phosphorylated form interacts with SRC (via SH2 domain) and SRC family members. Forms a signaling complex with EPHA1, LCK and phosphatidylinositol 3-kinase; upon activation by EFNA1. Interacts with GRB2 (via SH2 domain). Interacts with P53/TP53 and MDM2. Interacts with MYLK. Interacts with BCAR1. Interacts with PDPK1. Interacts (hypophosphorylated) with PXN. Interacts with RB1CC1. Interacts with RHOU. Interacts with VAV1. Interacts with LPXN and PTPN12. Phosphorylated on tyrosine residues in response to various stimuli that elevate the intracellular calcium concentration; this activation is indirect and may be mediated by production of reactive oxygen species (ROS). Tyr-402 is the major autophosphorylation site, but other kinases can also phosphorylate Tyr-402. Autophosphorylation occurs in trans, i.e. one subunit of the dimeric receptor phosphorylates tyrosine residues on the other subunit. Phosphorylation at Tyr-402 promotes interaction with SRC and SRC family members, leading to phosphorylation at Tyr-579; Tyr-580 and Tyr-881. Phosphorylation at Tyr-881 is important for interaction with GRB2. Phosphorylated on tyrosine residues upon activation of FGR and PKC. Recruitment by NPHP1 to cell matrix adhesions initiates Tyr-402 phosphorylation. In monocytes, adherence to substrata is required for tyrosine phosphorylation and kinase activation. Angiotensin II, thapsigargin and L-alpha-lysophosphatidic acid (LPA) also induce autophosphorylation and increase kinase activity. Phosphorylation by MYLK promotes ITGB2 activation and is thus essential to trigger neutrophil transmigration during lung injury. Dephosphorylated by PTPN12. Most abundant in the brain, with highest levels in amygdala and hippocampus. Low levels in kidney (at protein level). Also expressed in spleen and lymphocytes.

Its subcellular location is the cytoplasm. The protein localises to the perinuclear region. The protein resides in the cell membrane. It localises to the cell junction. It is found in the focal adhesion. Its subcellular location is the cell projection. The protein localises to the lamellipodium. The protein resides in the cell cortex. It localises to the nucleus. It carries out the reaction L-tyrosyl-[protein] + ATP = O-phospho-L-tyrosyl-[protein] + ADP + H(+). Its activity is regulated as follows. Activated in response to stimuli that lead to increased intracellular Ca(2+) levels; this activation is indirect and may be mediated by calcium-mediated production of reactive oxygen species (ROS). Activated by autophosphorylation at Tyr-402; this creates a binding site for SRC family kinases and leads to phosphorylation at additional tyrosine residues. Phosphorylation at Tyr-402, Tyr-579 and Tyr-580 is required for optimal kinase activity. Inhibited by PF-562,271, BIRB796, PF-4618433 and by PF-431396, PF-2318841 and their derivatives. Inhibited by sulfoximine-substituted trifluoromethylpyrimidines. Inhibited by 4-amino and 5-aryl substituted pyridinone compounds. Its function is as follows. Non-receptor protein-tyrosine kinase that regulates reorganization of the actin cytoskeleton, cell polarization, cell migration, adhesion, spreading and bone remodeling. Plays a role in the regulation of the humoral immune response, and is required for normal levels of marginal B-cells in the spleen and normal migration of splenic B-cells. Required for normal macrophage polarization and migration towards sites of inflammation. Regulates cytoskeleton rearrangement and cell spreading in T-cells, and contributes to the regulation of T-cell responses. Promotes osteoclastic bone resorption; this requires both PTK2B/PYK2 and SRC. May inhibit differentiation and activity of osteoprogenitor cells. Functions in signaling downstream of integrin and collagen receptors, immune receptors, G-protein coupled receptors (GPCR), cytokine, chemokine and growth factor receptors, and mediates responses to cellular stress. Forms multisubunit signaling complexes with SRC and SRC family members upon activation; this leads to the phosphorylation of additional tyrosine residues, creating binding sites for scaffold proteins, effectors and substrates. Regulates numerous signaling pathways. Promotes activation of phosphatidylinositol 3-kinase and of the AKT1 signaling cascade. Promotes activation of NOS3. Regulates production of the cellular messenger cGMP. Promotes activation of the MAP kinase signaling cascade, including activation of MAPK1/ERK2, MAPK3/ERK1 and MAPK8/JNK1. Promotes activation of Rho family GTPases, such as RHOA and RAC1. Recruits the ubiquitin ligase MDM2 to P53/TP53 in the nucleus, and thereby regulates P53/TP53 activity, P53/TP53 ubiquitination and proteasomal degradation. Acts as a scaffold, binding to both PDPK1 and SRC, thereby allowing SRC to phosphorylate PDPK1 at 'Tyr-9, 'Tyr-373', and 'Tyr-376'. Promotes phosphorylation of NMDA receptors by SRC family members, and thereby contributes to the regulation of NMDA receptor ion channel activity and intracellular Ca(2+) levels. May also regulate potassium ion transport by phosphorylation of potassium channel subunits. Phosphorylates SRC; this increases SRC kinase activity. Phosphorylates ASAP1, NPHP1, KCNA2 and SHC1. Promotes phosphorylation of ASAP2, RHOU and PXN; this requires both SRC and PTK2/PYK2. The polypeptide is Protein-tyrosine kinase 2-beta (PTK2B) (Homo sapiens (Human)).